We begin with the raw amino-acid sequence, 237 residues long: MIEMLFVKVPNEIDRHVFNFLSSNVSKEKQQAFVRYVNVKDAYRSLLGELLIRKYLIQVLNIPNENILFRKNEYGKPFVDFDIHFNISHSDEWVVCAISNHPVGIDIERISEIDIKIAEQFFHENEYIWLQSKAQNSQVSSFFELWTIKESYIKAIGKGMYIPINSFWIDKNQTQTVIYKQNKKEPVTIYEPELFEGYKCSCCSLFSSVTNLSITKLQVQELCNLFLDSTFSENNNF.

Mg(2+) is bound by residues D106, E108, and E150.

The protein belongs to the P-Pant transferase superfamily. Gsp/Sfp/HetI/AcpT family. Requires Mg(2+) as cofactor.

It carries out the reaction apo-[peptidyl-carrier protein] + CoA = holo-[peptidyl-carrier protein] + adenosine 3',5'-bisphosphate + H(+). Functionally, activates the five peptidyl carrier protein (PCP) domains of gramicidin synthase GrsAB, by transferring the 4'-phosphopantetheinyl moiety of coenzyme A (CoA) to a serine residue. Required for gramicidin S production. The chain is 4'-phosphopantetheinyl transferase gsp (gsp) from Aneurinibacillus migulanus (Bacillus migulanus).